Here is a 165-residue protein sequence, read N- to C-terminus: PARP-type zinc finger-containing protein C13F5.07c (165 aa).

The segment at 8–100 adopts a PARP-type; degenerate zinc-finger fold; sequence YRIEIAPNNR…KVVDAINEGH (93 aa). The span at 100-114 shows a compositional bias: basic and acidic residues; sequence HVSESDERESRKLGE. Positions 100–165 are disordered; it reads HVSESDERES…TDGSEAYEDD (66 aa). Polar residues predominate over residues 117 to 128; the sequence is NVNSQKLKTSSP. A compositionally biased stretch (basic residues) spans 131-141; sequence VVRKNKRHHTT. The span at 149–165 shows a compositional bias: acidic residues; that stretch reads SDLDAEFTDGSEAYEDD.

It localises to the cytoplasm. It is found in the nucleus. This is PARP-type zinc finger-containing protein C13F5.07c from Schizosaccharomyces pombe (strain 972 / ATCC 24843) (Fission yeast).